Here is a 474-residue protein sequence, read N- to C-terminus: Glutamate--tRNA ligase (474 aa).

The 'HIGH' region motif lies at 9–19; sequence PSPTGFLHVGG. The short motif at 240 to 244 is the 'KMSKS' region element; the sequence is KLSKR. Residue K243 coordinates ATP.

It belongs to the class-I aminoacyl-tRNA synthetase family. Glutamate--tRNA ligase type 1 subfamily. In terms of assembly, monomer.

The protein localises to the cytoplasm. It carries out the reaction tRNA(Glu) + L-glutamate + ATP = L-glutamyl-tRNA(Glu) + AMP + diphosphate. In terms of biological role, catalyzes the attachment of glutamate to tRNA(Glu) in a two-step reaction: glutamate is first activated by ATP to form Glu-AMP and then transferred to the acceptor end of tRNA(Glu). The polypeptide is Glutamate--tRNA ligase (Photobacterium profundum (strain SS9)).